A 225-amino-acid polypeptide reads, in one-letter code: MQLVTAAEMQTIDNYTVETIGMPQDVLIERAAMSVIDVIGAGHFNLDHILVLAGLGNNGADGVAISRLLYAQGFNVSLQFVGNVTRAKDSVKHQLDIIEKYGLVHAEKSDFNEATLIIDAIFGTGLNNLLPEGLQKMIKAANHIEKTVIAVDTPTGIDATTGEVRGAALKAHTTVTFGYNKIGLTQRVGGYLSGNVIVKDIGLLTPQDFNFSLPDKENSPSVATS.

The 201-residue stretch at 9–209 (MQTIDNYTVE…DIGLLTPQDF (201 aa)) folds into the YjeF N-terminal domain. 57-61 (NNGAD) is a (6S)-NADPHX binding site. The K(+) site is built by N58 and D119. Residues 123–129 (GTGLNNL) and D152 contribute to the (6S)-NADPHX site. Residue T155 coordinates K(+).

This sequence belongs to the NnrE/AIBP family. It depends on K(+) as a cofactor.

It catalyses the reaction (6R)-NADHX = (6S)-NADHX. It carries out the reaction (6R)-NADPHX = (6S)-NADPHX. Its function is as follows. Catalyzes the epimerization of the S- and R-forms of NAD(P)HX, a damaged form of NAD(P)H that is a result of enzymatic or heat-dependent hydration. This is a prerequisite for the S-specific NAD(P)H-hydrate dehydratase to allow the repair of both epimers of NAD(P)HX. The protein is NAD(P)H-hydrate epimerase of Leuconostoc sp. (strain C2).